Reading from the N-terminus, the 77-residue chain is Acyl carrier protein (77 aa).

Residues 2–77 (SEKLQKIQAL…DAVAYIEERS (76 aa)) enclose the Carrier domain. Ser-37 is subject to O-(pantetheine 4'-phosphoryl)serine.

Belongs to the acyl carrier protein (ACP) family. Post-translationally, 4'-phosphopantetheine is transferred from CoA to a specific serine of apo-ACP by AcpS. This modification is essential for activity because fatty acids are bound in thioester linkage to the sulfhydryl of the prosthetic group.

The protein resides in the cytoplasm. It participates in lipid metabolism; fatty acid biosynthesis. In terms of biological role, carrier of the growing fatty acid chain in fatty acid biosynthesis. The polypeptide is Acyl carrier protein (Desulforudis audaxviator (strain MP104C)).